The chain runs to 154 residues: MAALSSAAVTIPSMAPSAPGRRRMRSSLVVRASLGKAAGAAAVAVAASAMLAGGAMAQEVLLGANGGVLVFEPNDFTVKSGETITFKNNAGFPHNVVFDEDAVPSGVDVSKISQEEYLNAPGETFSVTLTVPGTYGFYCEPHAGAGMVGKVTVN.

Residues 1–57 constitute a chloroplast transit peptide; it reads MAALSSAAVTIPSMAPSAPGRRRMRSSLVVRASLGKAAGAAAVAVAASAMLAGGAMA. The Plastocyanin-like domain maps to 58–154; sequence QEVLLGANGG…AGMVGKVTVN (97 aa). The Cu cation site is built by His-94, Cys-139, His-142, and Met-147.

It belongs to the plastocyanin family. It depends on Cu(2+) as a cofactor.

The protein localises to the plastid. It localises to the chloroplast thylakoid membrane. Functionally, participates in electron transfer between P700 and the cytochrome b6-f complex in photosystem I. The protein is Plastocyanin, chloroplastic (PETE) of Oryza sativa subsp. indica (Rice).